Reading from the N-terminus, the 396-residue chain is ATP-dependent RNA helicase eIF4A (396 aa).

Residues 22–50 (YSFDDLNLKPNIVRGIFGYGYESPSAIQQ) carry the Q motif motif. Positions 53–223 (ILPITEGRDV…TKFMNNPVRI (171 aa)) constitute a Helicase ATP-binding domain. Residue 66-73 (AQSGTGKT) participates in ATP binding. A DEAD box motif is present at residues 171-174 (DEAD). In terms of domain architecture, Helicase C-terminal spans 234–395 (GIKQFYINVE…EMPANIGELF (162 aa)).

Belongs to the DEAD box helicase family. eIF4A subfamily. Component of the eIF4F complex, which composition varies with external and internal environmental conditions. It is composed of at least eIF4A, eIF4E and eIF4G.

It localises to the cytoplasm. The enzyme catalyses ATP + H2O = ADP + phosphate + H(+). Its function is as follows. ATP-dependent RNA helicase which is a subunit of the eIF4F complex involved in cap recognition and is required for mRNA binding to ribosome. In the current model of translation initiation, eIF4A unwinds RNA secondary structures in the 5'-UTR of mRNAs which is necessary to allow efficient binding of the small ribosomal subunit, and subsequent scanning for the initiator codon. This chain is ATP-dependent RNA helicase eIF4A (TIF1), found in Meyerozyma guilliermondii (strain ATCC 6260 / CBS 566 / DSM 6381 / JCM 1539 / NBRC 10279 / NRRL Y-324) (Yeast).